A 428-amino-acid chain; its full sequence is Histidinol dehydrogenase (428 aa).

S234, Q256, and H259 together coordinate substrate. Zn(2+)-binding residues include Q256 and H259. Active-site proton acceptor residues include E324 and H325. The substrate site is built by H325, D358, E412, and H417. D358 provides a ligand contact to Zn(2+). H417 serves as a coordination point for Zn(2+).

It belongs to the histidinol dehydrogenase family. Requires Zn(2+) as cofactor.

It catalyses the reaction L-histidinol + 2 NAD(+) + H2O = L-histidine + 2 NADH + 3 H(+). It participates in amino-acid biosynthesis; L-histidine biosynthesis; L-histidine from 5-phospho-alpha-D-ribose 1-diphosphate: step 9/9. Functionally, catalyzes the sequential NAD-dependent oxidations of L-histidinol to L-histidinaldehyde and then to L-histidine. The sequence is that of Histidinol dehydrogenase from Pelagibacter ubique (strain HTCC1062).